The chain runs to 110 residues: UPF0122 protein GWCH70_1086 (110 aa).

It belongs to the UPF0122 family.

Its function is as follows. Might take part in the signal recognition particle (SRP) pathway. This is inferred from the conservation of its genetic proximity to ftsY/ffh. May be a regulatory protein. In Geobacillus sp. (strain WCH70), this protein is UPF0122 protein GWCH70_1086.